The primary structure comprises 194 residues: Peptidyl-tRNA hydrolase (194 aa).

Position 16 (Tyr-16) interacts with tRNA. His-21 acts as the Proton acceptor in catalysis. Positions 67, 69, and 115 each coordinate tRNA.

The protein belongs to the PTH family. Monomer.

Its subcellular location is the cytoplasm. The catalysed reaction is an N-acyl-L-alpha-aminoacyl-tRNA + H2O = an N-acyl-L-amino acid + a tRNA + H(+). Hydrolyzes ribosome-free peptidyl-tRNAs (with 1 or more amino acids incorporated), which drop off the ribosome during protein synthesis, or as a result of ribosome stalling. In terms of biological role, catalyzes the release of premature peptidyl moieties from peptidyl-tRNA molecules trapped in stalled 50S ribosomal subunits, and thus maintains levels of free tRNAs and 50S ribosomes. The chain is Peptidyl-tRNA hydrolase from Colwellia psychrerythraea (strain 34H / ATCC BAA-681) (Vibrio psychroerythus).